Consider the following 305-residue polypeptide: Serine/threonine-protein kinase 16 (305 aa).

Gly2 carries the N-myristoyl glycine lipid modification. S-palmitoyl cysteine attachment occurs at residues Cys6 and Cys8. The 274-residue stretch at 20-293 (YLFIQKLGEG…PLLLSQLEAL (274 aa)) folds into the Protein kinase domain. ATP is bound by residues 26–34 (LGEGGFSYV) and Lys49. The active-site Proton acceptor is Asp148. Residues 166-202 (DLGSMNQACIHVEGSRQALTLQDWAAQRCTISYRAPE) form an activation loop region. A Phosphothreonine; by autocatalysis modification is found at Thr185. Ser197 carries the post-translational modification Phosphoserine; by autocatalysis. Phosphotyrosine; by autocatalysis is present on Tyr198.

Belongs to the protein kinase superfamily. Ser/Thr protein kinase family. As to quaternary structure, monomer. Interacts with DRG1 (via its N-terminal); the interaction phosphorylates DRG1. Mainly autophosphorylated on serine/threonine residues. Also autophosphorylated on Tyr-198. In terms of processing, it is uncertain whether palmitoylation is on Cys-6 and/or Cys-8. In terms of tissue distribution, ubiquitously expressed at very low levels.

Its subcellular location is the cytoplasm. It is found in the perinuclear region. It localises to the membrane. The catalysed reaction is L-seryl-[protein] + ATP = O-phospho-L-seryl-[protein] + ADP + H(+). It carries out the reaction L-threonyl-[protein] + ATP = O-phospho-L-threonyl-[protein] + ADP + H(+). It catalyses the reaction L-tyrosyl-[protein] + ATP = O-phospho-L-tyrosyl-[protein] + ADP + H(+). Its function is as follows. Membrane-associated protein kinase that phosphorylates on serine and threonine residues. In vitro substrates include DRG1, ENO1 and EIF4EBP1. Also autophosphorylates. May be involved in secretory vesicle trafficking or intracellular signaling. May have a role in regulating stromal-epithelial interactions that occur during ductal morphogenesis in the mammary gland. May be involved in TGF-beta signaling. Able to autophosphorylate on Tyr residue; it is however unclear whether it has tyrosine-protein kinase toward other proteins. The chain is Serine/threonine-protein kinase 16 (STK16) from Homo sapiens (Human).